The chain runs to 140 residues: Ribonuclease P protein component (140 aa).

This sequence belongs to the RnpA family. As to quaternary structure, consists of a catalytic RNA component (M1 or rnpB) and a protein subunit.

It carries out the reaction Endonucleolytic cleavage of RNA, removing 5'-extranucleotides from tRNA precursor.. Functionally, RNaseP catalyzes the removal of the 5'-leader sequence from pre-tRNA to produce the mature 5'-terminus. It can also cleave other RNA substrates such as 4.5S RNA. The protein component plays an auxiliary but essential role in vivo by binding to the 5'-leader sequence and broadening the substrate specificity of the ribozyme. The protein is Ribonuclease P protein component of Ralstonia pickettii (strain 12J).